Reading from the N-terminus, the 961-residue chain is Outer capsid protein VP2 (961 aa).

It belongs to the orbivirus VP2 family.

The protein resides in the virion. Its function is as follows. The VP2 protein is one of the two proteins (with VP5) which constitute the virus particle outer capsid. It is the major target of the host immunogenic response. Responsible for viral attachment to target host cell, probably by binding to sialic acid. This attachment induces virion internalization predominantly through clathrin-dependent endocytosis. In Antilocapra americana (Pronghorn), this protein is Outer capsid protein VP2 (Segment-2).